A 139-amino-acid chain; its full sequence is Hydrogenase maturation factor HypA (139 aa).

Ni(2+) contacts are provided by M1 and H2. Residues C73 and C76 each coordinate Zn(2+). Position 98 (H98) interacts with Ni(2+). Residues C110 and C113 each coordinate Zn(2+).

This sequence belongs to the HypA/HybF family. In terms of assembly, monomer and homodimer. Could also form hexamers. Forms a complex with HypB.

Involved in the maturation of [NiFe] hydrogenases. Required for nickel insertion into the metal center of the hydrogenase. The sequence is that of Hydrogenase maturation factor HypA from Thermococcus kodakarensis (strain ATCC BAA-918 / JCM 12380 / KOD1) (Pyrococcus kodakaraensis (strain KOD1)).